Here is a 305-residue protein sequence, read N- to C-terminus: UDP-3-O-acyl-N-acetylglucosamine deacetylase (305 aa).

The Zn(2+) site is built by His-79, His-238, and Asp-242. His-265 acts as the Proton donor in catalysis.

It belongs to the LpxC family. Zn(2+) serves as cofactor.

The catalysed reaction is a UDP-3-O-[(3R)-3-hydroxyacyl]-N-acetyl-alpha-D-glucosamine + H2O = a UDP-3-O-[(3R)-3-hydroxyacyl]-alpha-D-glucosamine + acetate. Its pathway is glycolipid biosynthesis; lipid IV(A) biosynthesis; lipid IV(A) from (3R)-3-hydroxytetradecanoyl-[acyl-carrier-protein] and UDP-N-acetyl-alpha-D-glucosamine: step 2/6. Its function is as follows. Catalyzes the hydrolysis of UDP-3-O-myristoyl-N-acetylglucosamine to form UDP-3-O-myristoylglucosamine and acetate, the committed step in lipid A biosynthesis. This is UDP-3-O-acyl-N-acetylglucosamine deacetylase from Sodalis glossinidius (strain morsitans).